The sequence spans 90 residues: Protein LIM1 (90 aa).

Positions M1–S26 are cleaved as a signal peptide. Cystine bridges form between C29–C66, C39–C55, C56–C81, and C68–C88.

The protein belongs to the A9/FIL1 family.

Its subcellular location is the secreted. The sequence is that of Protein LIM1 (LIM1) from Lilium longiflorum (Trumpet lily).